A 156-amino-acid chain; its full sequence is ATP synthase subunit b (156 aa).

A helical membrane pass occupies residues 1 to 21 (MSINATLLIQIIAFVLLIWFV).

The protein belongs to the ATPase B chain family. As to quaternary structure, F-type ATPases have 2 components, F(1) - the catalytic core - and F(0) - the membrane proton channel. F(1) has five subunits: alpha(3), beta(3), gamma(1), delta(1), epsilon(1). F(0) has three main subunits: a(1), b(2) and c(10-14). The alpha and beta chains form an alternating ring which encloses part of the gamma chain. F(1) is attached to F(0) by a central stalk formed by the gamma and epsilon chains, while a peripheral stalk is formed by the delta and b chains.

It localises to the cell inner membrane. Functionally, f(1)F(0) ATP synthase produces ATP from ADP in the presence of a proton or sodium gradient. F-type ATPases consist of two structural domains, F(1) containing the extramembraneous catalytic core and F(0) containing the membrane proton channel, linked together by a central stalk and a peripheral stalk. During catalysis, ATP synthesis in the catalytic domain of F(1) is coupled via a rotary mechanism of the central stalk subunits to proton translocation. In terms of biological role, component of the F(0) channel, it forms part of the peripheral stalk, linking F(1) to F(0). The polypeptide is ATP synthase subunit b (Hydrogenovibrio crunogenus (strain DSM 25203 / XCL-2) (Thiomicrospira crunogena)).